A 247-amino-acid polypeptide reads, in one-letter code: Oil body-associated protein 2B (247 aa).

A disordered region spans residues 1-28; the sequence is MASSDKVPVACPASSGDGKEPMGNPTKT.

Belongs to the OBAP family.

The polypeptide is Oil body-associated protein 2B (Arabidopsis thaliana (Mouse-ear cress)).